Here is a 588-residue protein sequence, read N- to C-terminus: Phosphatidylinositol-3,5-bisphosphate 3-phosphatase mtm-1 (588 aa).

Residues 20 to 91 (IQESIDLKLL…GQVSRIEKVG (72 aa)) enclose the GRAM domain. The Myotubularin phosphatase domain maps to 164 to 543 (GWKIYSAEKE…CGLHVWIDYY (380 aa)). Residues N293, N316, and I317 each coordinate a 1,2-diacyl-sn-glycero-3-phospho-(1D-myo-inositol-3,5-bisphosphate). The a 1,2-diacyl-sn-glycero-3-phospho-(1D-myo-inositol-3-phosphate) site is built by N293, N316, and I317. The active-site Phosphocysteine intermediate is the C378. 8 residues coordinate a 1,2-diacyl-sn-glycero-3-phospho-(1D-myo-inositol-3,5-bisphosphate): S379, D380, G381, W382, D383, R384, K420, and R424. The a 1,2-diacyl-sn-glycero-3-phospho-(1D-myo-inositol-3-phosphate) site is built by S379, D380, G381, W382, D383, and R384. S379 contributes to the phosphate binding site. 4 residues coordinate phosphate: G381, W382, D383, and R384. R424 is a binding site for a 1,2-diacyl-sn-glycero-3-phospho-(1D-myo-inositol-3-phosphate). A coiled-coil region spans residues 563–588 (AQFVDEKKQLLDEIMALDDAAQKLTA).

Belongs to the protein-tyrosine phosphatase family. Non-receptor class myotubularin subfamily. In terms of tissue distribution, expressed in embryo, larva and in adults. Expressed in a few head and tail neurons. Expressed in hypodermis, body wall and pharyngeal muscles, sheath cells, vulva, distal tip cells and coelomocytes.

It is found in the cell membrane. Its subcellular location is the cell projection. The protein localises to the phagocytic cup. It localises to the apical cell membrane. The protein resides in the cytoplasmic granule membrane. It catalyses the reaction a 1,2-diacyl-sn-glycero-3-phospho-(1D-myo-inositol-3,5-bisphosphate) + H2O = a 1,2-diacyl-sn-glycero-3-phospho-(1D-myo-inositol-5-phosphate) + phosphate. The enzyme catalyses a 1,2-diacyl-sn-glycero-3-phospho-(1D-myo-inositol-3-phosphate) + H2O = a 1,2-diacyl-sn-glycero-3-phospho-(1D-myo-inositol) + phosphate. The catalysed reaction is 1,2-dioctanoyl-sn-glycero-3-phospho-(1-D-myo-inositol-3-phosphate) + H2O = 1,2-dioctanoyl-sn-glycero-3-phospho-(1D-myo-inositol) + phosphate. Lipid phosphatase that specifically dephosphorylates phosphatidylinositol 3-phosphate (PI3P) and phosphatidylinositol 3,5-bisphosphate (PI(3,5)P2). Negatively regulates accumulation of PI3P on intracellular vesicles. Negatively regulates phagocytosis of apoptotic cells probably by limiting the recruitment and/or the activation of ced-5, ced-2 and ced-12 complex. In addition, may positively regulate phagosome maturation by promoting recycling of apoptotic receptor ced-1 back to the plasma membrane. Essential for embryonic and larval development. May promote migration of distal tip cells. In Caenorhabditis elegans, this protein is Phosphatidylinositol-3,5-bisphosphate 3-phosphatase mtm-1.